A 384-amino-acid chain; its full sequence is Probable splicing factor YJU2B (384 aa).

The disordered stretch occupies residues 1–28 (MGERKGTNKYYPPDFDPAKHGSLNGYRN). Residues 183 to 212 (NSLLRSKFREEKKQIKEEEERDQALLTKAS) are a coiled coil. Positions 275–331 (GIRTKTPSVPGISPVSLGVVRRTSKEENKAEDKSVESPDGSRSRKAEGMCRKEETGC) are disordered. Residues 297–331 (TSKEENKAEDKSVESPDGSRSRKAEGMCRKEETGC) show a composition bias toward basic and acidic residues.

The protein belongs to the CWC16 family.

Its subcellular location is the nucleus. Functionally, may be involved in mRNA splicing. The chain is Probable splicing factor YJU2B (yju2b) from Xenopus laevis (African clawed frog).